A 375-amino-acid chain; its full sequence is Putative F-box only protein 11 (375 aa).

The F-box domain occupies 1-46; the sequence is MVSVNLPWELVEEILCRVPPQSLVKFRTVCKQWNSLFDDNKFVNDH.

The protein is Putative F-box only protein 11 (FBX11) of Arabidopsis thaliana (Mouse-ear cress).